Here is a 160-residue protein sequence, read N- to C-terminus: Glucagon-1 (160 aa).

Residues 1-22 form the signal peptide; that stretch reads MSDPGFLAAPVLLLLLVSLASA. 3 consecutive propeptides follow at residues 23 to 40, 74 to 79, and 116 to 127; these read SLEQ…RPLS, GGSELQ, and DGGDHLAENSED. The interval 112 to 132 is disordered; sequence KSRRDGGDHLAENSEDKRHAE.

Belongs to the glucagon family.

It localises to the secreted. Functionally, promotes hydrolysis of glycogen and lipids, and raises the blood sugar level. The sequence is that of Glucagon-1 (gcg1) from Petromyzon marinus (Sea lamprey).